The primary structure comprises 84 residues: MKGMILFISCLLLIGIVVECKEGYLMDHEGCKLSCFIRPSGYCGRECGIKKGSSGYCAWPACYCYGLPNWVKVWDRATNKCGKK.

An N-terminal signal peptide occupies residues 1–20; that stretch reads MKGMILFISCLLLIGIVVEC. Residues 21–82 form the LCN-type CS-alpha/beta domain; sequence KEGYLMDHEG…VWDRATNKCG (62 aa). Cystine bridges form between C31/C81, C35/C57, C43/C62, and C47/C64. C81 carries the post-translational modification Cysteine amide.

This sequence belongs to the long (4 C-C) scorpion toxin superfamily. Sodium channel inhibitor family. Post-translationally, C-terminal amidation is important for high activity. Expressed by the venom gland.

Its subcellular location is the secreted. Functionally, voltage-gated sodium channels (Nav) gating-modifier. Acts both as alpha- and beta-toxin, since it affects not only activation but also inactivation of Nav channels. Binds to Nav domain DII and impairs the four Nav channel voltage sensors movements. Depending on Nav channel subtypes tested, can also bind Nav domains DIII (low affinity) and DIV (very low affinity). Acts on almost all the Nav channels tested (mammalian Nav1.2/SCN2A, Nav1.3/SCN3A, Nav1.4/SCN4A, Nav1.5/SCN5A, Nav1.6/SCN8A, Nav1.9/SCN11A, and insect DmNav1). Is highly active against both mammals and insects. Irreversibly modulates DmNav channels. Other Ts1 activities have been studied, such as immunomodulation, antimicrobial activity or exocrine secretion. This toxin exhibits an antifungal activity against filamentous fungi. In vitro, it has an important immunomodulatory effect on macrophages by stimulating the release of pro-inflammatory cytokines. It also shows an activity in exocrine secretion in pancreas, stomach and adrenal gland. The chain is Beta-mammal/insect toxin Ts1 from Tityus serrulatus (Brazilian scorpion).